A 132-amino-acid chain; its full sequence is Small ribosomal subunit protein uS8 (132 aa).

This sequence belongs to the universal ribosomal protein uS8 family. As to quaternary structure, part of the 30S ribosomal subunit. Contacts proteins S5 and S12.

Its function is as follows. One of the primary rRNA binding proteins, it binds directly to 16S rRNA central domain where it helps coordinate assembly of the platform of the 30S subunit. The sequence is that of Small ribosomal subunit protein uS8 from Borrelia hermsii (strain HS1 / DAH).